The primary structure comprises 641 residues: 1-deoxy-D-xylulose-5-phosphate synthase (641 aa).

Thiamine diphosphate contacts are provided by residues His71 and 112–114; that span reads SHA. Position 144 (Asp144) interacts with Mg(2+). Residues 145 to 146, Asn173, Tyr284, and Glu365 each bind thiamine diphosphate; that span reads GA. Asn173 contributes to the Mg(2+) binding site.

The protein belongs to the transketolase family. DXPS subfamily. In terms of assembly, homodimer. It depends on Mg(2+) as a cofactor. Thiamine diphosphate is required as a cofactor.

The enzyme catalyses D-glyceraldehyde 3-phosphate + pyruvate + H(+) = 1-deoxy-D-xylulose 5-phosphate + CO2. Its pathway is metabolic intermediate biosynthesis; 1-deoxy-D-xylulose 5-phosphate biosynthesis; 1-deoxy-D-xylulose 5-phosphate from D-glyceraldehyde 3-phosphate and pyruvate: step 1/1. Catalyzes the acyloin condensation reaction between C atoms 2 and 3 of pyruvate and glyceraldehyde 3-phosphate to yield 1-deoxy-D-xylulose-5-phosphate (DXP). The polypeptide is 1-deoxy-D-xylulose-5-phosphate synthase (Mycobacterium avium (strain 104)).